Consider the following 336-residue polypeptide: Tetraacyldisaccharide 4'-kinase (336 aa).

Position 60–67 (60–67 (TIGGTGKT)) interacts with ATP.

It belongs to the LpxK family.

The catalysed reaction is a lipid A disaccharide + ATP = a lipid IVA + ADP + H(+). It participates in glycolipid biosynthesis; lipid IV(A) biosynthesis; lipid IV(A) from (3R)-3-hydroxytetradecanoyl-[acyl-carrier-protein] and UDP-N-acetyl-alpha-D-glucosamine: step 6/6. Functionally, transfers the gamma-phosphate of ATP to the 4'-position of a tetraacyldisaccharide 1-phosphate intermediate (termed DS-1-P) to form tetraacyldisaccharide 1,4'-bis-phosphate (lipid IVA). This is Tetraacyldisaccharide 4'-kinase from Pseudomonas putida (strain W619).